Reading from the N-terminus, the 347-residue chain is uncharacterized protein (347 aa).

The signal sequence occupies residues 1–21; it reads MRYRIFLLFFFALLPTSLVWA.

This is an uncharacterized protein from Escherichia coli (strain K12).